The sequence spans 415 residues: MYLKIVILVTFPLVCFTQDDTPLSKPMAIDYQAEFAWDLYKKLQLGFTQNLAIAPYSLRKIFVCLQQLTVSTNPASAALSEQLKNVLKFNPKGKLPDLVRRRYSSQRAMLERENSFNTTTLAAVIGREKKTNSFWDLPNSCAIFVGSLRPGSPKQMSRRFNAAMRNISKSGMQNFLSTSDIDRDLDFLIADSWIFKGLWSYQFEEQHTTTCNFYTNSTSKGLMRFMYLQEYLKYGYFSEWNVEAVELPLHHGSSFSCMLMMPVKADIGVLIKSLNHRRFKDIYSKMSFSKTDVRLPQFTLRIKFSAKSILQQFGFNAAFNESVFHVFDNKNAVPLGDVIQKVKLVMDHDGEQSAKMYVDRRMGNLFIAHQPFIFVIFEKTQLVPIIVGHMVTASTPKDIGPESDEISCDRPPRYQ.

A signal peptide spans 1–17 (MYLKIVILVTFPLVCFT). N117, N166, N216, and N320 each carry an N-linked (GlcNAc...) asparagine glycan.

This sequence belongs to the serpin family. (Microbial infection) Interacts with Zika virus envelope protein E and Zika virus-like particles; the interaction does not affect Zika virus replication in human endothelial cells and keratinocytes. In terms of processing, the N-terminus is blocked. Female salivary gland (at protein level). Not detected in female carcass without head and salivary glands. Not detected in male tissues.

Its subcellular location is the secreted. In terms of biological role, anticoagulant serpin-type protein inhibiting host coagulation factor Xa (F10). Does not inhibit host thrombin (F2) and trypsin. Functionally, (Microbial infection) Does not affect Zika virus replication in human endothelial cells and keratinocytes. In Aedes aegypti (Yellowfever mosquito), this protein is FXa-directed anticoagulant.